A 267-amino-acid chain; its full sequence is tRNA-cytidine(32) 2-sulfurtransferase 1 (267 aa).

The short motif at 42–47 (SGGKDS) is the PP-loop motif element. [4Fe-4S] cluster-binding residues include Cys117, Cys120, and Cys208.

This sequence belongs to the TtcA family. As to quaternary structure, homodimer. Mg(2+) is required as a cofactor. Requires [4Fe-4S] cluster as cofactor.

The protein localises to the cytoplasm. The enzyme catalyses cytidine(32) in tRNA + S-sulfanyl-L-cysteinyl-[cysteine desulfurase] + AH2 + ATP = 2-thiocytidine(32) in tRNA + L-cysteinyl-[cysteine desulfurase] + A + AMP + diphosphate + H(+). The protein operates within tRNA modification. Functionally, catalyzes the ATP-dependent 2-thiolation of cytidine in position 32 of tRNA, to form 2-thiocytidine (s(2)C32). The sulfur atoms are provided by the cysteine/cysteine desulfurase (IscS) system. The chain is tRNA-cytidine(32) 2-sulfurtransferase 1 from Francisella tularensis subsp. novicida (strain U112).